The following is a 392-amino-acid chain: MNIHEYQGKDILRKFGVAVPKGIVAFSPEEAKQAAIQLFEEQNSPVVVIKAQIHAGGRGKAGGVKLAKSPEEVFDIAQQMLGITLVTHQTGPEGKEVRRLLVEEGMNIDKEFYVGITLDRSTSQNVLMVSTEGGMEIEKVAEETPEKLLKIQVNPLFGLQAFQARQAAFFLELEGEQFKNTVKFITALYNAYTSIDAAIAEINPLVVTKEGRVLALDAKINFDSNALFRHKDFLELRDISEEDPFEVEASKSNLNYVRLDGNVGCMVNGAGLAMGTMDMIQLAGGRPANFLDVGGGASPQTVEEGFKIILSDKNVKAILVNIFGGIVRCDRVAGGIIEAAKKVDLHLPVIVRLEGTNASIAQKMLDESGLNLIAAKGLHDAAKKVHEALEPA.

Residues 9–248 (KDILRKFGVA…ISEEDPFEVE (240 aa)) form the ATP-grasp domain. Residues K50, 57-59 (GRG), E103, M106, and E111 contribute to the ATP site. 2 residues coordinate Mg(2+): N203 and D217. Residues N268 and 325–327 (GIV) each bind substrate.

Belongs to the succinate/malate CoA ligase beta subunit family. In terms of assembly, heterotetramer of two alpha and two beta subunits. Requires Mg(2+) as cofactor.

It catalyses the reaction succinate + ATP + CoA = succinyl-CoA + ADP + phosphate. The catalysed reaction is GTP + succinate + CoA = succinyl-CoA + GDP + phosphate. Its pathway is carbohydrate metabolism; tricarboxylic acid cycle; succinate from succinyl-CoA (ligase route): step 1/1. Succinyl-CoA synthetase functions in the citric acid cycle (TCA), coupling the hydrolysis of succinyl-CoA to the synthesis of either ATP or GTP and thus represents the only step of substrate-level phosphorylation in the TCA. The beta subunit provides nucleotide specificity of the enzyme and binds the substrate succinate, while the binding sites for coenzyme A and phosphate are found in the alpha subunit. This Chlorobium phaeobacteroides (strain DSM 266 / SMG 266 / 2430) protein is Succinate--CoA ligase [ADP-forming] subunit beta.